The following is a 593-amino-acid chain: Bifunctional purine biosynthesis protein ATIC (593 aa).

Residues 1–147 enclose the MGS-like domain; sequence MAARQQLALL…KNHARVTVVC (147 aa). The interval 1 to 199 is IMP cyclohydrolase; sequence MAARQQLALL…ISDYFRKEYS (199 aa). IMP-binding positions include 13–15, 35–38, 65–68, 102–103, and 126–127; these read SEK, SGGT, RVKT, CN, and DI. The active-site Proton donor/acceptor; for FAICAR cyclization activity is K138. Residue K200 is modified to N6-acetyllysine. Residues 200–593 form an AICAR formyltransferase region; it reads KGVSQLPLRY…IHTNLRLFHH (394 aa). Residues 208-209, H268, G317, D340, N432, and R452 contribute to the 5-amino-1-(5-phospho-beta-D-ribosyl)imidazole-4-carboxamide site; that span reads RY. H268 serves as the catalytic Proton acceptor; for AICAR formyltransferase activity. Position 453 (I453) interacts with (6R)-10-formyltetrahydrofolate. Position 542 (F542) interacts with 5-amino-1-(5-phospho-beta-D-ribosyl)imidazole-4-carboxamide. (6R)-10-formyltetrahydrofolate-binding positions include D547 and 566 to 567; that span reads SA. 5-amino-1-(5-phospho-beta-D-ribosyl)imidazole-4-carboxamide is bound at residue R589.

The protein belongs to the PurH family. In terms of assembly, homodimer. Associates with internalized INSR complexes on Golgi/endosomal membranes. Interacts with INSR; ATIC together with PRKAA2/AMPK2 and HACD3/PTPLAD1 is proposed to be part of a signaling network regulating INSR autophosphorylation and endocytosis.

It is found in the cytoplasm. Its subcellular location is the cytosol. The enzyme catalyses (6R)-10-formyltetrahydrofolate + 5-amino-1-(5-phospho-beta-D-ribosyl)imidazole-4-carboxamide = 5-formamido-1-(5-phospho-D-ribosyl)imidazole-4-carboxamide + (6S)-5,6,7,8-tetrahydrofolate. The catalysed reaction is 10-formyldihydrofolate + 5-amino-1-(5-phospho-beta-D-ribosyl)imidazole-4-carboxamide = 5-formamido-1-(5-phospho-D-ribosyl)imidazole-4-carboxamide + 7,8-dihydrofolate. It carries out the reaction IMP + H2O = 5-formamido-1-(5-phospho-D-ribosyl)imidazole-4-carboxamide. The protein operates within purine metabolism; IMP biosynthesis via de novo pathway; 5-formamido-1-(5-phospho-D-ribosyl)imidazole-4-carboxamide from 5-amino-1-(5-phospho-D-ribosyl)imidazole-4-carboxamide (10-formyl THF route): step 1/1. Its pathway is purine metabolism; IMP biosynthesis via de novo pathway; IMP from 5-formamido-1-(5-phospho-D-ribosyl)imidazole-4-carboxamide: step 1/1. Its activity is regulated as follows. AMP and XMP inhibit AICAR formyltransferase activity. AICAR formyltransferase activity is competitively inhibited by 2-[5-hydroxy-3-methyl-1-(2-methyl-4-sulfo-phenyl)-1H-pyrazol-4-ylazo]-4-sulfo-benzoic acid (326203-A). FAICAR cyclization is competitively inhibited by 1,5-dihydroimidazo[4,5-c][1,2,6]thiadiazin-4(3H)-one-2,2-dioxide and the corresponding nucleoside and nucleoside monophosphate. Bifunctional enzyme that catalyzes the last two steps of purine biosynthesis. Acts as a transformylase that incorporates a formyl group to the AMP analog AICAR (5-amino-1-(5-phospho-beta-D-ribosyl)imidazole-4-carboxamide) to produce the intermediate formyl-AICAR (FAICAR). Can use both 10-formyldihydrofolate and 10-formyltetrahydrofolate as the formyl donor in this reaction. Also catalyzes the cyclization of FAICAR to inosine monophosphate (IMP). Promotes insulin receptor/INSR autophosphorylation and is involved in INSR internalization. The protein is Bifunctional purine biosynthesis protein ATIC (ATIC) of Gallus gallus (Chicken).